The chain runs to 164 residues: MNIVDQQTFRDAMSCMGAAVNIITTDGPAGRAGFTASAVCSVTDTPPTLLVCLNRGASVWPAFNENRTLCVNTLSAGQEPLSNLFGGKTPMEHRFAAARWQTGVTGCPQLEEALVSFDCRISQVVSVGTHDILFCAIEAIHRHTTPYGLVWFDRSYHALMRPAC.

It belongs to the non-flavoprotein flavin reductase family. RutF subfamily.

It carries out the reaction FMNH2 + NAD(+) = FMN + NADH + 2 H(+). Its function is as follows. Catalyzes the reduction of FMN to FMNH2 which is used to reduce pyrimidine by RutA via the Rut pathway. This chain is FMN reductase (NADH) RutF, found in Escherichia coli (strain K12 / MC4100 / BW2952).